A 409-amino-acid chain; its full sequence is Dual-specificity RNA methyltransferase RlmN (409 aa).

Residue Glu117 is the Proton acceptor of the active site. Residues 128–377 (LNGRKTLCIS…CTIRQTRGDD (250 aa)) enclose the Radical SAM core domain. Cys135 and Cys382 form a disulfide bridge. [4Fe-4S] cluster is bound by residues Cys142, Cys146, and Cys149. Residues 205-206 (GE), Ser237, 259-261 (SLH), and Asn339 each bind S-adenosyl-L-methionine. Cys382 serves as the catalytic S-methylcysteine intermediate.

Belongs to the radical SAM superfamily. RlmN family. [4Fe-4S] cluster is required as a cofactor.

Its subcellular location is the cytoplasm. The enzyme catalyses adenosine(2503) in 23S rRNA + 2 reduced [2Fe-2S]-[ferredoxin] + 2 S-adenosyl-L-methionine = 2-methyladenosine(2503) in 23S rRNA + 5'-deoxyadenosine + L-methionine + 2 oxidized [2Fe-2S]-[ferredoxin] + S-adenosyl-L-homocysteine. It catalyses the reaction adenosine(37) in tRNA + 2 reduced [2Fe-2S]-[ferredoxin] + 2 S-adenosyl-L-methionine = 2-methyladenosine(37) in tRNA + 5'-deoxyadenosine + L-methionine + 2 oxidized [2Fe-2S]-[ferredoxin] + S-adenosyl-L-homocysteine. Specifically methylates position 2 of adenine 2503 in 23S rRNA and position 2 of adenine 37 in tRNAs. m2A2503 modification seems to play a crucial role in the proofreading step occurring at the peptidyl transferase center and thus would serve to optimize ribosomal fidelity. The polypeptide is Dual-specificity RNA methyltransferase RlmN (Psychrobacter arcticus (strain DSM 17307 / VKM B-2377 / 273-4)).